The sequence spans 856 residues: Glucans biosynthesis glucosyltransferase H (856 aa).

The next 6 helical transmembrane spans lie at isoleucine 144–methionine 164, isoleucine 198–methionine 218, valine 517–leucine 537, leucine 574–tryptophan 594, threonine 608–phenylalanine 628, and isoleucine 691–glycine 711.

Belongs to the glycosyltransferase 2 family. OpgH subfamily.

The protein localises to the cell inner membrane. It functions in the pathway glycan metabolism; osmoregulated periplasmic glucan (OPG) biosynthesis. Functionally, involved in the biosynthesis of osmoregulated periplasmic glucans (OPGs). This Pseudomonas fluorescens (strain Pf0-1) protein is Glucans biosynthesis glucosyltransferase H.